Consider the following 239-residue polypeptide: mRNA turnover protein 4 homolog (239 aa).

The segment at 216 to 239 is disordered; the sequence is QQMGDDLPESAPESEGESEEEDDS. The segment covering 221 to 239 has biased composition (acidic residues); sequence DLPESAPESEGESEEEDDS. 3 positions are modified to phosphoserine: Ser-225, Ser-229, and Ser-233.

Belongs to the universal ribosomal protein uL10 family. Associates with the pre-60S ribosomal particle. Interacts with MINAS-60 (product of an alternative open reading frame of RBM10).

The protein resides in the nucleus. It localises to the nucleolus. It is found in the cytoplasm. Component of the ribosome assembly machinery. Nuclear paralog of the ribosomal protein P0, it binds pre-60S subunits at an early stage of assembly in the nucleolus, and is replaced by P0 in cytoplasmic pre-60S subunits and mature 80S ribosomes. The polypeptide is mRNA turnover protein 4 homolog (MRTO4) (Bos taurus (Bovine)).